A 485-amino-acid polypeptide reads, in one-letter code: Probable RNA-binding protein 46 (485 aa).

RRM domains follow at residues 61 to 139 (CEVF…VSLD), 141 to 223 (CRLF…WADP), and 236 to 308 (KVLY…LAKP).

In terms of assembly, interacts with YTHDC2, MEIOC, MOV10, CNOT6L, DDX4, UPF1 and PABPC1.

Its subcellular location is the cytoplasm. Essential for male and female fertility, playing a crucial role in regulating germ cell development by ensuring the proper progression of meiosis prophase I. Regulates mitotic-to-meiotic transition in spermatogenesis by forming a complex with MEIOC and YTHDC2 which recognizes and down-regulates mitotic transcripts for a successful meiotic entry. Required for normal synaptonemal complex formation during meiosis, binding meiotic cohesin subunit mRNAs containing GCCUAU/GUUCGA motifs in their 3'UTRs regions and positively regulating their translation. Required for spermatogonial differentiation in both developing and adult testis. The sequence is that of Probable RNA-binding protein 46 (RBM46) from Macaca fascicularis (Crab-eating macaque).